A 126-amino-acid polypeptide reads, in one-letter code: Cornifin alpha (126 aa).

Ser-2 is modified (N-acetylserine). 13 tandem repeats follow at residues Ser-3–Pro-14, Gln-18–Pro-29, Glu-31–Lys-38, Glu-39–Pro-46, Glu-47–Pro-54, Glu-55–Pro-62, Glu-63–Pro-70, Gln-71–Pro-78, Glu-79–Pro-86, Glu-87–Pro-94, Glu-95–Pro-102, Glu-103–Pro-110, and Gln-111–Pro-118. The 2 X 12 AA approximate repeats stretch occupies residues Ser-3 to Pro-29. The disordered stretch occupies residues Gln-20 to Pro-43. Positions Glu-31–Gln-122 are 11 X 8 AA approximate tandem repeats. Residues Pro-104–Lys-126 are disordered.

This sequence belongs to the cornifin (SPRR) family. In terms of tissue distribution, suprabasal layers of squamous-differentiated tissues such as epidermis, esophagus, tongue and trachea.

Its subcellular location is the cytoplasm. Cross-linked envelope protein of keratinocytes. It is a keratinocyte protein that first appears in the cell cytosol, but ultimately becomes cross-linked to membrane proteins by transglutaminase. All that results in the formation of an insoluble envelope beneath the plasma membrane. The sequence is that of Cornifin alpha from Oryctolagus cuniculus (Rabbit).